The sequence spans 260 residues: Triosephosphate isomerase (260 aa).

11 to 13 lines the substrate pocket; the sequence is NWK. The active-site Electrophile is H103. Residue E175 is the Proton acceptor of the active site. Substrate is bound by residues G181, S220, and 241-242; that span reads GG.

Belongs to the triosephosphate isomerase family. As to quaternary structure, homodimer.

Its subcellular location is the cytoplasm. The enzyme catalyses D-glyceraldehyde 3-phosphate = dihydroxyacetone phosphate. It participates in carbohydrate biosynthesis; gluconeogenesis. It functions in the pathway carbohydrate degradation; glycolysis; D-glyceraldehyde 3-phosphate from glycerone phosphate: step 1/1. Involved in the gluconeogenesis. Catalyzes stereospecifically the conversion of dihydroxyacetone phosphate (DHAP) to D-glyceraldehyde-3-phosphate (G3P). This is Triosephosphate isomerase from Shewanella loihica (strain ATCC BAA-1088 / PV-4).